The following is a 550-amino-acid chain: uncharacterized protein (550 aa).

The signal sequence occupies residues 1-13 (MAGALFEPSFAAA). The tract at residues 312–358 (DAQPDPHLSGDEPPSRPLTPETTLFEALTPDPEPDPPATHAPAELIT) is disordered.

To M.tuberculosis Rv3776.

This is an uncharacterized protein from Mycobacterium tuberculosis (strain CDC 1551 / Oshkosh).